We begin with the raw amino-acid sequence, 116 residues long: UPF0102 protein Sala_0262 (116 aa).

This sequence belongs to the UPF0102 family.

The chain is UPF0102 protein Sala_0262 from Sphingopyxis alaskensis (strain DSM 13593 / LMG 18877 / RB2256) (Sphingomonas alaskensis).